The primary structure comprises 797 residues: MAP/microtubule affinity-regulating kinase 3 (797 aa).

The tract at residues 1 to 35 (MSTRTPLPTVNERDTENHISHGDGRQEVTSRTGRS) is disordered. Over residues 11–28 (NERDTENHISHGDGRQEV) the composition is skewed to basic and acidic residues. At Ser42 the chain carries Phosphoserine. In terms of domain architecture, Protein kinase spans 56-307 (YRLLKTIGKG…LEQIMKDRWI (252 aa)). ATP-binding positions include 62–70 (IGKGNFAKV) and Lys85. The active-site Proton acceptor is Asp178. Thr211 bears the Phosphothreonine; by LKB1 mark. The region spanning 326-365 (ISDQKRIDIMVGMGYSQEEIQESLSKMKYDEITATYLLLG) is the UBA domain. Ser368, Ser374, Ser376, Ser380, Ser383, Ser400, Ser419, and Ser469 each carry phosphoserine. Disordered regions lie at residues 372–504 (DASD…GMTR) and 585–701 (PDQR…KPRS). Low complexity predominate over residues 374 to 385 (SDSSSSSNLSLA). Polar residues predominate over residues 391 to 400 (SDLSNSTGQS). Polar residues-rich tracts occupy residues 492-504 (VPSS…GMTR) and 585-602 (PDQR…SATT). Residues Ser593 and Ser596 each carry the phosphoserine modification. Position 602 is a phosphothreonine (Thr602). Thr617 carries the post-translational modification Phosphothreonine; by PKC/PRKCZ. A phosphoserine mark is found at Ser636, Ser651, and Ser654. Over residues 637 to 664 (PSLSHEATPLSQTRSRGSTNLFSKLTSK) the composition is skewed to polar residues. Residues 669–678 (LPTEYERNGR) are compositionally biased toward basic and acidic residues. Ser687 carries the post-translational modification Phosphoserine. A compositionally biased stretch (basic and acidic residues) spans 689–699 (EQKDENREAKP). Positions 748–797 (DGHAESLVQWEMEVCKLPRLSLNGVRFKRISGTSIAFKNIASKIANELKL) constitute a KA1 domain.

The protein belongs to the protein kinase superfamily. CAMK Ser/Thr protein kinase family. SNF1 subfamily. As to quaternary structure, interacts with MAPT/TAU. Interacts with DLG5 (via coiled-coil domain). Interacts with STK3/MST2 and STK4/MST1 in the presence of DLG5. Interacts with YWHAB, YWHAG, YWHAQ and YWHAZ. Interacts with PKP2 (via N-terminus). Interacts with CDC25C. Interacts with KSR1. In terms of processing, phosphorylated at Thr-211 by STK11/LKB1 in complex with STE20-related adapter-alpha (STRADA) pseudo kinase and CAB39. Phosphorylation at Thr-617 by PRKCZ/aPKC inhibits the kinase activity.

The protein resides in the cell membrane. It is found in the cell projection. Its subcellular location is the dendrite. It localises to the cytoplasm. It carries out the reaction L-seryl-[protein] + ATP = O-phospho-L-seryl-[protein] + ADP + H(+). The catalysed reaction is L-threonyl-[protein] + ATP = O-phospho-L-threonyl-[protein] + ADP + H(+). Its activity is regulated as follows. Activated by phosphorylation on Thr-211. Inhibited by phosphorylation on Thr-617. Its function is as follows. Serine/threonine-protein kinase. Involved in the specific phosphorylation of microtubule-associated proteins for MAP2 and MAP4. Phosphorylates the microtubule-associated protein MAPT/TAU. Phosphorylates CDC25C on 'Ser-216'. Regulates localization and activity of some histone deacetylases by mediating phosphorylation of HDAC7, promoting subsequent interaction between HDAC7 and 14-3-3 and export from the nucleus. Regulates localization and activity of MITF by mediating its phosphorylation, promoting subsequent interaction between MITF and 14-3-3 and retention in the cytosol. Negatively regulates the Hippo signaling pathway and antagonizes the phosphorylation of LATS1. Cooperates with DLG5 to inhibit the kinase activity of STK3/MST2 toward LATS1. Phosphorylates PKP2 and KSR1. This chain is MAP/microtubule affinity-regulating kinase 3 (Mark3), found in Rattus norvegicus (Rat).